We begin with the raw amino-acid sequence, 311 residues long: Fluoride export protein 1 (311 aa).

Topologically, residues 1–6 (MLLTQS) are cytoplasmic. Residues 7 to 25 (YFCIMSMLGTLARLGLTAL) form a helical membrane-spanning segment. Residues 26–29 (NTYP) lie on the Extracellular side of the membrane. A helical membrane pass occupies residues 30–50 (GAPFSGLLWVQFVGCVIMGFC). Topologically, residues 51-65 (QTESVFFPRPKHNAT) are cytoplasmic. A helical membrane pass occupies residues 66-86 (FLLAITTGFCGSLTTFSSWML). Over 87-106 (QMFTGMANLDPFERRGRGYS) the chain is Extracellular. The helical transmembrane segment at 107–127 (FLSVVSDFMVTMCIAMSSLIW) threads the bilayer. The Cytoplasmic segment spans residues 128-154 (GKQIGKTTGQWRIGKVAFAWPIPAHTH). The chain crosses the membrane as a helical span at residues 155–175 (IVVRVLLLLLSICFFVGAAFY). Residues 176-186 (TAYTTNVTHRG) lie on the Extracellular side of the membrane. N-linked (GlcNAc...) asparagine glycosylation is present at Asn181. The chain crosses the membrane as a helical span at residues 187–207 (IGFSLIFSPFAALTRLYLARF). The Cytoplasmic portion of the chain corresponds to 208 to 212 (LNSPQ). A helical membrane pass occupies residues 213–233 (YFIPYGTLCANVFATLLLSIM). Residues 234–250 (YMIPQITHCTPVSRSVM) lie on the Extracellular side of the membrane. The helical transmembrane segment at 251–268 (YGIQNGFCAVLSTLSTFS) threads the bilayer. Residues 269 to 278 (NELHTMPIKR) lie on the Cytoplasmic side of the membrane. Residues 279-299 (AYIYCIISVAISFSICVIVDG) form a helical membrane-spanning segment. The Extracellular segment spans residues 300-311 (ATAWGHGYTEKY).

This sequence belongs to the fluoride channel Fluc/FEX (TC 1.A.43) family.

The protein resides in the cell membrane. The catalysed reaction is fluoride(in) = fluoride(out). Fluoride channel required for the rapid expulsion of cytoplasmic fluoride. The chain is Fluoride export protein 1 (fex1) from Schizosaccharomyces pombe (strain 972 / ATCC 24843) (Fission yeast).